The following is a 152-amino-acid chain: MHIDALSRRLIDRYQHGMPLCAEPYRAMAEELGCSEGEVLACLEQLQEDGGLSRIGPVFEHSRAGASTLVALAVPEARLEQVAARINAFPEVNHNYLREHRYNLWFVLTGPDRAHIDALLAEIEADTGLVPLDLPMLHAFRIDLGFPLGDPS.

It belongs to the Ahb/Nir family. As to quaternary structure, probably forms a complex composed of NirD, NirL, NirG and NirH. All proteins are required for the total conversion of siroheme to didecarboxysiroheme.

The enzyme catalyses siroheme + 2 H(+) = 12,18-didecarboxysiroheme + 2 CO2. The protein operates within porphyrin-containing compound metabolism. Involved in heme d1 biosynthesis. Catalyzes the decarboxylation of siroheme into didecarboxysiroheme. The protein is Siroheme decarboxylase NirD subunit of Stutzerimonas stutzeri (Pseudomonas stutzeri).